Reading from the N-terminus, the 439-residue chain is Ribosomal protein uS12 methylthiotransferase RimO (439 aa).

The region spanning 5–115 is the MTTase N-terminal domain; sequence PKIGFVSLGC…LIEAVHTHAP (111 aa). [4Fe-4S] cluster contacts are provided by C14, C50, C79, C146, C150, and C153. The Radical SAM core domain maps to 132-369; that stretch reads LTPRHYSYLK…MGLQAQISTD (238 aa). The region spanning 372–439 is the TRAM domain; the sequence is QRFVGTEQQV…ESTEYDLIAD (68 aa).

It belongs to the methylthiotransferase family. RimO subfamily. The cofactor is [4Fe-4S] cluster.

It localises to the cytoplasm. The enzyme catalyses L-aspartate(89)-[ribosomal protein uS12]-hydrogen + (sulfur carrier)-SH + AH2 + 2 S-adenosyl-L-methionine = 3-methylsulfanyl-L-aspartate(89)-[ribosomal protein uS12]-hydrogen + (sulfur carrier)-H + 5'-deoxyadenosine + L-methionine + A + S-adenosyl-L-homocysteine + 2 H(+). Its function is as follows. Catalyzes the methylthiolation of an aspartic acid residue of ribosomal protein uS12. This chain is Ribosomal protein uS12 methylthiotransferase RimO, found in Francisella tularensis subsp. novicida (strain U112).